The chain runs to 370 residues: TD and POZ domain-containing protein 4 (370 aa).

The MATH domain occupies 19–149 (KLCYRWTISN…DDKFTLLCKV (131 aa)). A BTB domain is found at 188–251 (TDCSLLVAGH…MMGFIYTGKV (64 aa)).

This sequence belongs to the Tdpoz family.

This is TD and POZ domain-containing protein 4 from Mus musculus (Mouse).